The primary structure comprises 318 residues: Thymidylate synthase (318 aa).

Residues arginine 25 and 180-181 contribute to the dUMP site; that span reads RR. Cysteine 200 (nucleophile) is an active-site residue. DUMP contacts are provided by residues 220–223, asparagine 231, and 261–263; these read RSGD and HIY. Aspartate 223 is a binding site for (6R)-5,10-methylene-5,6,7,8-tetrahydrofolate. Alanine 317 lines the (6R)-5,10-methylene-5,6,7,8-tetrahydrofolate pocket.

Belongs to the thymidylate synthase family. Bacterial-type ThyA subfamily. Homodimer.

The protein resides in the cytoplasm. It catalyses the reaction dUMP + (6R)-5,10-methylene-5,6,7,8-tetrahydrofolate = 7,8-dihydrofolate + dTMP. Its pathway is pyrimidine metabolism; dTTP biosynthesis. Catalyzes the reductive methylation of 2'-deoxyuridine-5'-monophosphate (dUMP) to 2'-deoxythymidine-5'-monophosphate (dTMP) while utilizing 5,10-methylenetetrahydrofolate (mTHF) as the methyl donor and reductant in the reaction, yielding dihydrofolate (DHF) as a by-product. This enzymatic reaction provides an intracellular de novo source of dTMP, an essential precursor for DNA biosynthesis. The sequence is that of Thymidylate synthase from Lactobacillus gasseri (strain ATCC 33323 / DSM 20243 / BCRC 14619 / CIP 102991 / JCM 1131 / KCTC 3163 / NCIMB 11718 / NCTC 13722 / AM63).